Consider the following 210-residue polypeptide: Uracil phosphoribosyltransferase (210 aa).

5-phospho-alpha-D-ribose 1-diphosphate-binding positions include Arg80, Arg105, and 132 to 140; that span reads DPMLATGGS. Uracil is bound by residues Ile195 and 200–202; that span reads GDA. Residue Asp201 participates in 5-phospho-alpha-D-ribose 1-diphosphate binding.

The protein belongs to the UPRTase family. It depends on Mg(2+) as a cofactor.

The catalysed reaction is UMP + diphosphate = 5-phospho-alpha-D-ribose 1-diphosphate + uracil. It functions in the pathway pyrimidine metabolism; UMP biosynthesis via salvage pathway; UMP from uracil: step 1/1. Allosterically activated by GTP. Catalyzes the conversion of uracil and 5-phospho-alpha-D-ribose 1-diphosphate (PRPP) to UMP and diphosphate. The protein is Uracil phosphoribosyltransferase of Thermoanaerobacter pseudethanolicus (strain ATCC 33223 / 39E) (Clostridium thermohydrosulfuricum).